The following is an 850-amino-acid chain: Protein monoglycylase TTLL8 (850 aa).

Disordered stretches follow at residues 1-29 (MEPE…QGIS) and 228-254 (RSSR…DAEN). Residues 222-580 (SHQSCSRSSR…DRSCDIGNFE (359 aa)) form the TTL domain. ATP-binding positions include K354, 360–361 (RG), 392–395 (QKYI), 405–407 (KFD), and 449–450 (CN). Position 360 (R360) interacts with a protein. Residues D527, E540, and N542 each contribute to the Mg(2+) site. E540 contacts ATP. The segment at 627 to 652 (AQPLKARGPSAMPDPAQGPPSPALQR) is disordered.

It depends on Mg(2+) as a cofactor.

It is found in the cytoplasm. Its subcellular location is the cytoskeleton. The protein localises to the cell projection. The protein resides in the cilium. It localises to the cilium axoneme. It is found in the flagellum axoneme. It carries out the reaction L-glutamyl-[protein] + glycine + ATP = glycyl-L-glutamyl-[protein] + ADP + phosphate + H(+). Its function is as follows. Monoglycylase which modifies both tubulin and non-tubulin proteins, adding a single glycine to the gamma-carboxyl groups of specific glutamate residues to generate monoglycine side chains within the C-terminal tail of target proteins. Not involved in elongation step of the polyglycylation reaction. Preferentially monoglycylates alpha-tubulin over beta-tubulin. Together with TTLL3, mediates microtubule glycylation of primary and motile cilia, which is essential for their stability and maintenance. Together with TTLL3, glycylates sperm flagella which regulates axonemal dynein motor activity, thereby controlling flagellar beat, directional sperm swimming and male fertility. Monoglycylates non-tubulin proteins such as ANP32A, ANP32B, SET, NCL and NAP1. This is Protein monoglycylase TTLL8 from Homo sapiens (Human).